Here is a 355-residue protein sequence, read N- to C-terminus: Phosphoribosylformylglycinamidine cyclo-ligase (355 aa).

The protein belongs to the AIR synthase family.

It localises to the cytoplasm. The catalysed reaction is 2-formamido-N(1)-(5-O-phospho-beta-D-ribosyl)acetamidine + ATP = 5-amino-1-(5-phospho-beta-D-ribosyl)imidazole + ADP + phosphate + H(+). The protein operates within purine metabolism; IMP biosynthesis via de novo pathway; 5-amino-1-(5-phospho-D-ribosyl)imidazole from N(2)-formyl-N(1)-(5-phospho-D-ribosyl)glycinamide: step 2/2. In Methylobacterium nodulans (strain LMG 21967 / CNCM I-2342 / ORS 2060), this protein is Phosphoribosylformylglycinamidine cyclo-ligase.